The sequence spans 120 residues: Large ribosomal subunit protein bL12 (120 aa).

This sequence belongs to the bacterial ribosomal protein bL12 family. In terms of assembly, homodimer. Part of the ribosomal stalk of the 50S ribosomal subunit. Forms a multimeric L10(L12)X complex, where L10 forms an elongated spine to which 2 to 4 L12 dimers bind in a sequential fashion. Binds GTP-bound translation factors.

Functionally, forms part of the ribosomal stalk which helps the ribosome interact with GTP-bound translation factors. Is thus essential for accurate translation. In Alkaliphilus metalliredigens (strain QYMF), this protein is Large ribosomal subunit protein bL12.